Reading from the N-terminus, the 176-residue chain is ATP-dependent protease subunit HslV (176 aa).

T2 is an active-site residue. Residues G157, C160, and T163 each coordinate Na(+).

This sequence belongs to the peptidase T1B family. HslV subfamily. As to quaternary structure, a double ring-shaped homohexamer of HslV is capped on each side by a ring-shaped HslU homohexamer. The assembly of the HslU/HslV complex is dependent on binding of ATP.

It is found in the cytoplasm. The catalysed reaction is ATP-dependent cleavage of peptide bonds with broad specificity.. Allosterically activated by HslU binding. Protease subunit of a proteasome-like degradation complex believed to be a general protein degrading machinery. In Proteus mirabilis (strain HI4320), this protein is ATP-dependent protease subunit HslV.